The sequence spans 228 residues: Large ribosomal subunit protein bL25 (228 aa).

Residues 196–228 (EEAAVAEAQSAESAEGKAEAEAEATNEKNKSEA) are disordered. The span at 209-228 (AEGKAEAEAEATNEKNKSEA) shows a compositional bias: basic and acidic residues.

This sequence belongs to the bacterial ribosomal protein bL25 family. CTC subfamily. Part of the 50S ribosomal subunit; part of the 5S rRNA/L5/L18/L25 subcomplex. Contacts the 5S rRNA. Binds to the 5S rRNA independently of L5 and L18.

In terms of biological role, this is one of the proteins that binds to the 5S RNA in the ribosome where it forms part of the central protuberance. This is Large ribosomal subunit protein bL25 from Methylorubrum extorquens (strain PA1) (Methylobacterium extorquens).